The chain runs to 20 residues: Dentinal fluid transport-stimulating peptide (20 aa).

Residues 1-20 (GVIAWELQHNEPGRKDSTAG) form a disordered region. Residues 8–20 (QHNEPGRKDSTAG) are compositionally biased toward basic and acidic residues.

Functionally, this peptide stimulates the transport of dentinal fluid, which is important for the prevention of dental caries. The chain is Dentinal fluid transport-stimulating peptide from Rattus norvegicus (Rat).